The chain runs to 83 residues: Cell division topological specificity factor (83 aa).

The protein belongs to the MinE family.

Functionally, prevents the cell division inhibition by proteins MinC and MinD at internal division sites while permitting inhibition at polar sites. This ensures cell division at the proper site by restricting the formation of a division septum at the midpoint of the long axis of the cell. The protein is Cell division topological specificity factor of Bordetella parapertussis (strain 12822 / ATCC BAA-587 / NCTC 13253).